The sequence spans 228 residues: Phosphoglycolate phosphatase (228 aa).

The active-site Nucleophile is Asp-12. The Mg(2+) site is built by Asp-12, Asp-14, and Asp-177.

It belongs to the HAD-like hydrolase superfamily. CbbY/CbbZ/Gph/YieH family. Mg(2+) serves as cofactor.

It carries out the reaction 2-phosphoglycolate + H2O = glycolate + phosphate. It functions in the pathway organic acid metabolism; glycolate biosynthesis; glycolate from 2-phosphoglycolate: step 1/1. Its function is as follows. Specifically catalyzes the dephosphorylation of 2-phosphoglycolate. Is involved in the dissimilation of the intracellular 2-phosphoglycolate formed during the DNA repair of 3'-phosphoglycolate ends, a major class of DNA lesions induced by oxidative stress. The chain is Phosphoglycolate phosphatase from Vibrio parahaemolyticus serotype O3:K6 (strain RIMD 2210633).